A 282-amino-acid polypeptide reads, in one-letter code: Prohibitin-1 (282 aa).

The short motif at 106–109 is the AIM element; it reads YQNL.

The protein belongs to the prohibitin family. The mitochondrial prohibitin complex consists of two subunits (phb1 and phb2). The subunits assemble into a membrane-associated ring-shaped supercomplex of approximately 1 mDa.

The protein localises to the mitochondrion inner membrane. It localises to the cytoplasm. Prohibitin probably acts as a holdase/unfoldase for the stabilization of newly synthesized mitochondrial proteins. Involved in mitophagy; may act as an adapter for atg8 that supports mitophagosome assembly. Negatively regulates the proteolytic processing of atg32 via the i-AAA protease. Acts as a negative regulator of the m-AAA protease. In Schizosaccharomyces pombe (strain 972 / ATCC 24843) (Fission yeast), this protein is Prohibitin-1 (phb1).